Here is a 166-residue protein sequence, read N- to C-terminus: Early E3 18.5 kDa glycoprotein (166 aa).

An N-terminal signal peptide occupies residues 1-19 (MGPILVLLVLLSLLEPGSA). At 20–131 (NYDPCLDFDP…SKDNIVTFSI (112 aa)) the chain is on the lumenal side. A glycan (N-linked (GlcNAc...) asparagine; by host) is linked at asparagine 31. 2 disulfides stabilise this stretch: cysteine 32–cysteine 50 and cysteine 44–cysteine 106. Asparagine 63, asparagine 67, and asparagine 97 each carry an N-linked (GlcNAc...) asparagine; by host glycan. Residues 132–152 (AYCLCACLLTALLCVCIHLLV) traverse the membrane as a helical segment. Over 153 to 166 (TTRIKNANNKEKMP) the chain is Cytoplasmic. The Di-lysine motif signature appears at 162-166 (KEKMP).

This sequence belongs to the adenoviridae E19 family. Both disulfide bonds are absolutely critical for the interaction with MHC antigens. Post-translationally, N-glycosylated; high-mannose.

The protein localises to the host endoplasmic reticulum membrane. Functionally, binds and retains class I heavy chains in the endoplasmic reticulum during the early period of virus infection, thereby impairing their transport to the cell surface. Also delays the expression of class I alleles that it cannot affect by direct retention. Binds transporters associated with antigen processing (TAP) and acts as a tapasin inhibitor, preventing class I/TAP association. In consequence, infected cells are masked for immune recognition by cytotoxic T-lymphocytes. This Human adenovirus B serotype 11 (strain Slobiski) (HAdV-11) protein is Early E3 18.5 kDa glycoprotein.